A 186-amino-acid chain; its full sequence is KERAMHVGRKKGQIVDTVVQEQRPSVLLELGAYCGYSAVRMARLLLPSARLLTIELNPDNAAIAQQVVDFAGLQDRVTVVVGASQDIIPQLKKKYDVDTLDMVFLDHWKDRYLPDTLLLEECGLLRKGTVLLADNVICPGAPDFLAHVRGCGRFECTHFSSYLEYSQMVDGLEKAVYKGPGSPAQP.

S-adenosyl-L-methionine is bound by residues Val7, Glu29, Ser37, Glu55, Leu56, 82–85 (GASQ), Ser84, and Asp106. Asp106 lines the Mg(2+) pocket. Substrate is bound at residue Lys109. 2 residues coordinate Mg(2+): Asp134 and Asn135. Residues Asn135 and Glu164 each coordinate substrate. Ser182 carries the post-translational modification Phosphoserine.

Belongs to the class I-like SAM-binding methyltransferase superfamily. Cation-dependent O-methyltransferase family. The cofactor is Mg(2+).

The protein localises to the cytoplasm. It localises to the cell membrane. The enzyme catalyses a catechol + S-adenosyl-L-methionine = a guaiacol + S-adenosyl-L-homocysteine + H(+). It carries out the reaction 2-hydroxyestrone + S-adenosyl-L-methionine = 2-hydroxy-3-methoxy-estrone + S-adenosyl-L-homocysteine + H(+). The catalysed reaction is 4-hydroxyestrone + S-adenosyl-L-methionine = 4-methoxyestrone + S-adenosyl-L-homocysteine + H(+). It catalyses the reaction 2-hydroxyestrone + S-adenosyl-L-methionine = 2-methoxyestrone + S-adenosyl-L-homocysteine + H(+). The enzyme catalyses 4-hydroxy-17beta-estradiol + S-adenosyl-L-methionine = 4-methoxy-17beta-estradiol + S-adenosyl-L-homocysteine + H(+). It carries out the reaction 2-hydroxy-17beta-estradiol + S-adenosyl-L-methionine = 2-hydroxy-3-methoxy-17beta-estradiol + S-adenosyl-L-homocysteine + H(+). The catalysed reaction is 2-hydroxy-17beta-estradiol + S-adenosyl-L-methionine = 2-methoxy-17beta-estradiol + S-adenosyl-L-homocysteine + H(+). Catalyzes the O-methylation, and thereby the inactivation, of catecholamine neurotransmitters and catechol hormones. Also shortens the biological half-lives of certain neuroactive drugs, like L-DOPA, alpha-methyl DOPA and isoproterenol. This is Catechol O-methyltransferase (COMT) from Sus scrofa (Pig).